A 108-amino-acid polypeptide reads, in one-letter code: Small ribosomal subunit protein uS17 (108 aa).

It belongs to the universal ribosomal protein uS17 family. Part of the 30S ribosomal subunit.

In terms of biological role, one of the primary rRNA binding proteins, it binds specifically to the 5'-end of 16S ribosomal RNA. This Methanoregula boonei (strain DSM 21154 / JCM 14090 / 6A8) protein is Small ribosomal subunit protein uS17.